Reading from the N-terminus, the 328-residue chain is Nitrilase (328 aa).

One can recognise a CN hydrolase domain in the interval 9 to 286 (VRVAAIQAEP…EGILYANVDV (278 aa)). Glutamate 49 serves as the catalytic Proton acceptor. Lysine 131 is a catalytic residue. Cysteine 166 (nucleophile) is an active-site residue.

It belongs to the carbon-nitrogen hydrolase superfamily. Nitrilase family.

It carries out the reaction a nitrile + 2 H2O = a carboxylate + NH4(+). Nitrilase that hydrolyzes preferentially 4-cyanopyridine. Is also able to hydrolyze some aliphatic nitriles, such as (R,S)-mandelonitrile. This Penicillium rubens (strain ATCC 28089 / DSM 1075 / NRRL 1951 / Wisconsin 54-1255) (Penicillium chrysogenum) protein is Nitrilase.